The following is a 606-amino-acid chain: NADH-ubiquinone oxidoreductase chain 5 (606 aa).

A run of 15 helical transmembrane segments spans residues 4–24 (FSSL…MMSL), 43–63 (AFIT…ELII), 87–107 (MMFT…SMWY), 117–137 (FFKY…ANNL), 140–160 (LFIG…WWYG), 171–191 (AVLY…WFLT), 213–233 (LIGL…HPWL), 241–261 (TPVS…FLLI), 272–292 (FIQS…AMCA), 310–330 (LGLM…LHIC), 366–386 (MPFT…MPFL), 413–433 (LIAT…ALLG), 457–477 (LLIG…PTTI), 482–502 (MPYY…ILAL), and 582–602 (GLIK…MMLF).

In terms of assembly, core subunit of respiratory chain NADH dehydrogenase (Complex I) which is composed of 45 different subunits.

Its subcellular location is the mitochondrion inner membrane. The catalysed reaction is a ubiquinone + NADH + 5 H(+)(in) = a ubiquinol + NAD(+) + 4 H(+)(out). In terms of biological role, core subunit of the mitochondrial membrane respiratory chain NADH dehydrogenase (Complex I) which catalyzes electron transfer from NADH through the respiratory chain, using ubiquinone as an electron acceptor. Essential for the catalytic activity and assembly of complex I. The polypeptide is NADH-ubiquinone oxidoreductase chain 5 (MT-ND5) (Bos indicus (Zebu)).